Reading from the N-terminus, the 167-residue chain is MPRYFDGDFLPPKGRFAICVARFNGFITEELAKGAVDTLVRHGVADADIDVYRCPGTYELPGLVRRVTETRQYVGVITLGAVIRGGTPHFDYVAGECAKGIGAVAFEAAAATPAKTVTFGVLTTDTVEQAIDRAGVKAGNKGAEATLACIEMVNLYAKMSATDGRKA.

5-amino-6-(D-ribitylamino)uracil is bound by residues phenylalanine 23, threonine 57–glutamate 59, and alanine 81–isoleucine 83. (2S)-2-hydroxy-3-oxobutyl phosphate is bound at residue glycine 86–threonine 87. Histidine 89 functions as the Proton donor in the catalytic mechanism. Residue phenylalanine 119 coordinates 5-amino-6-(D-ribitylamino)uracil. Residue arginine 133 coordinates (2S)-2-hydroxy-3-oxobutyl phosphate.

Belongs to the DMRL synthase family.

It carries out the reaction (2S)-2-hydroxy-3-oxobutyl phosphate + 5-amino-6-(D-ribitylamino)uracil = 6,7-dimethyl-8-(1-D-ribityl)lumazine + phosphate + 2 H2O + H(+). It participates in cofactor biosynthesis; riboflavin biosynthesis; riboflavin from 2-hydroxy-3-oxobutyl phosphate and 5-amino-6-(D-ribitylamino)uracil: step 1/2. Catalyzes the formation of 6,7-dimethyl-8-ribityllumazine by condensation of 5-amino-6-(D-ribitylamino)uracil with 3,4-dihydroxy-2-butanone 4-phosphate. This is the penultimate step in the biosynthesis of riboflavin. The protein is 6,7-dimethyl-8-ribityllumazine synthase of Myxococcus xanthus (strain DK1622).